Consider the following 336-residue polypeptide: MSKYKILDSHIHLYSLANIPLLHWDEGNPLHGNRRLDEYIENSQSTQFDVEGVVWIECDAKIDLTQGLKGLENPIEEYLYICRNINGKLLPEEGVSTPFKRRLIKAMIPFAPMPLGSAGVEEYVKALKTRNSSEFHLVKGFRYLIQDKPPLTISDPHFVSSFQWLDSNGYVFDLGIDMRSGGLWQFKETLEVFKKVPNLKYIINHLTKPCLDFDPETIDSNPDFLSWKRLVTEMYITTPNSYMKLSGGFSEVEQDVALDVTSTSRHVYPWFKVVYELWGPERTIFASNWPVCAIPAGQNLTEKWFQVCETLFDSIGMDEDTRRKIYYSNAFKAYNI.

Belongs to the metallo-dependent hydrolases superfamily. A divalent metal cation serves as cofactor.

The catalysed reaction is L-rhamnono-1,4-lactone + H2O = L-rhamnonate + H(+). Inhibited by Zn(2+), Fe(2+) and Cu(2+), but not by EDTA. Functionally, hydrolase with high substrate specificity for L-rhamnono-1,4-lactone. Catalyzes the second step in an alternative pathway for rhamnose utilization that does not involve phosphorylated intermediates. In Scheffersomyces stipitis (strain ATCC 58785 / CBS 6054 / NBRC 10063 / NRRL Y-11545) (Yeast), this protein is L-rhamnono-gamma-lactonase (LRA2).